Reading from the N-terminus, the 691-residue chain is Gex-3-interacting protein 13 (691 aa).

Disordered regions lie at residues 18–97 and 171–195; these read TASL…SAHL and PASP…KRQR. Low complexity predominate over residues 31–46; sequence SSFTTTSESTSPPYSS. The segment covering 47–57 has biased composition (basic and acidic residues); sequence SEHHSPTDQRT. Over residues 58 to 79 the composition is skewed to polar residues; sequence ETPTSDSGNASFSPENVATSFE. The span at 171-183 shows a compositional bias: low complexity; the sequence is PASPCTTAASAPS. 2 BED-type zinc fingers span residues 194–242 and 424–473; these read QRRN…YEKV and LRRH…YEKV. C212, C215, H230, H235, C443, C446, H461, and H466 together coordinate Zn(2+).

In terms of assembly, interacts with gex-3.

The chain is Gex-3-interacting protein 13 (gei-13) from Caenorhabditis elegans.